A 1792-amino-acid chain; its full sequence is BTB/POZ domain-containing protein 8 (1792 aa).

2 BTB domains span residues 58–127 and 206–273; these read TDVT…NIKN and PDID…DIPD. 8 disordered regions span residues 528–554, 581–658, 670–692, 707–768, 788–815, 831–989, 1151–1283, and 1519–1607; these read DKGD…SDSG, SDGL…PRQV, TGQK…SGAR, KPLK…CDSP, SRPV…NNSV, AILK…KPHK, ERTN…SNDR, and SIDS…KSLD. 2 stretches are compositionally biased toward polar residues: residues 541 to 552 and 588 to 601; these read FSSSQQRKQVSD and GHSS…INKT. 2 stretches are compositionally biased toward basic and acidic residues: residues 602 to 625 and 640 to 650; these read LKQD…ELKT and SKTENGDKARL. The span at 724–740 shows a compositional bias: polar residues; it reads GPSSRSTDSSMEFSIST. The segment covering 744–758 has biased composition (basic and acidic residues); it reads DEPKENGSTEEEKPS. Positions 838-865 are enriched in polar residues; sequence TSNGCTAAQQRTKSTPSNLTKTQGSQGE. Residues 866–877 are compositionally biased toward low complexity; it reads SPNSVKSSVSSR. Basic and acidic residues-rich tracts occupy residues 878-891 and 927-939; these read QSDE…HNTT and KKGE…DSKQ. Positions 947–956 are enriched in polar residues; that stretch reads ISKTQPSSQR. The span at 969-987 shows a compositional bias: basic and acidic residues; the sequence is MFHDVRDNNNKDSVSEQKP. Composition is skewed to polar residues over residues 1151-1160 and 1195-1215; these read ERTNGTLNSA and SDVS…PKNM. Over residues 1250–1259 the composition is skewed to low complexity; it reads SDTGSATTSS. The segment covering 1566–1594 has biased composition (basic and acidic residues); it reads IQQRSKFLDSDVKSQERPCHLDLHQREPN. Residues 1597–1607 are compositionally biased toward polar residues; that stretch reads IPKNSSTKSLD.

As to quaternary structure, interacts (via N-terminus) with adapter protein complex AP-2 subunits alpha (AP2A1) and beta (AP2B1). In terms of tissue distribution, highly expressed in fetal brain. Weakly expressed in adult brain and prostate.

The protein resides in the cell projection. Its subcellular location is the axon. It is found in the presynapse. The protein localises to the cytoplasmic vesicle. It localises to the clathrin-coated vesicle. The protein resides in the nucleus. Its function is as follows. Involved in clathrin-mediated endocytosis at the synapse. Plays a role in neuronal development and in synaptic vesicle recycling in mature neurons, a process required for normal synaptic transmission. In Homo sapiens (Human), this protein is BTB/POZ domain-containing protein 8.